The primary structure comprises 200 residues: Imidazole glycerol phosphate synthase subunit HisH (200 aa).

The Glutamine amidotransferase type-1 domain occupies 3–200 (DVALIDAGGA…LRNFLEMSFP (198 aa)). The Nucleophile role is filled by cysteine 78. Active-site residues include histidine 179 and glutamate 181.

Heterodimer of HisH and HisF.

It is found in the cytoplasm. The enzyme catalyses 5-[(5-phospho-1-deoxy-D-ribulos-1-ylimino)methylamino]-1-(5-phospho-beta-D-ribosyl)imidazole-4-carboxamide + L-glutamine = D-erythro-1-(imidazol-4-yl)glycerol 3-phosphate + 5-amino-1-(5-phospho-beta-D-ribosyl)imidazole-4-carboxamide + L-glutamate + H(+). It carries out the reaction L-glutamine + H2O = L-glutamate + NH4(+). The protein operates within amino-acid biosynthesis; L-histidine biosynthesis; L-histidine from 5-phospho-alpha-D-ribose 1-diphosphate: step 5/9. Functionally, IGPS catalyzes the conversion of PRFAR and glutamine to IGP, AICAR and glutamate. The HisH subunit catalyzes the hydrolysis of glutamine to glutamate and ammonia as part of the synthesis of IGP and AICAR. The resulting ammonia molecule is channeled to the active site of HisF. This Xanthomonas euvesicatoria pv. vesicatoria (strain 85-10) (Xanthomonas campestris pv. vesicatoria) protein is Imidazole glycerol phosphate synthase subunit HisH.